The sequence spans 81 residues: MSHSVRVYDTCIGCTQCVRACPCDVLEMVPWDGCKAGQIASAPRAEDCIGCKRCETACPTDFLSVRVYLGSETTRSLGLTY.

4Fe-4S ferredoxin-type domains are found at residues 2 to 31 (SHSVRVYDTCIGCTQCVRACPCDVLEMVPW) and 39 to 68 (IASAPRAEDCIGCKRCETACPTDFLSVRVY). [4Fe-4S] cluster is bound by residues Cys-11, Cys-14, Cys-17, Cys-21, Cys-48, Cys-51, Cys-54, and Cys-58.

As to quaternary structure, the eukaryotic PSI reaction center is composed of at least 11 subunits. [4Fe-4S] cluster serves as cofactor.

It is found in the plastid. The protein resides in the chloroplast thylakoid membrane. It catalyses the reaction reduced [plastocyanin] + hnu + oxidized [2Fe-2S]-[ferredoxin] = oxidized [plastocyanin] + reduced [2Fe-2S]-[ferredoxin]. Its function is as follows. Apoprotein for the two 4Fe-4S centers FA and FB of photosystem I (PSI); essential for photochemical activity. FB is the terminal electron acceptor of PSI, donating electrons to ferredoxin. The C-terminus interacts with PsaA/B/D and helps assemble the protein into the PSI complex. Required for binding of PsaD and PsaE to PSI. PSI is a plastocyanin/cytochrome c6-ferredoxin oxidoreductase, converting photonic excitation into a charge separation, which transfers an electron from the donor P700 chlorophyll pair to the spectroscopically characterized acceptors A0, A1, FX, FA and FB in turn. This chain is Photosystem I iron-sulfur center, found in Emiliania huxleyi (Coccolithophore).